The chain runs to 365 residues: 1-aminocyclopropane-1-carboxylate oxidase homolog 9 (365 aa).

A Fe2OG dioxygenase domain is found at 214–313; that stretch reads KGLLMLCHYY…RISVACFVSS (100 aa). Residues H238, D240, and H294 each contribute to the Fe cation site. R304 lines the 2-oxoglutarate pocket.

The protein belongs to the iron/ascorbate-dependent oxidoreductase family. Fe(2+) serves as cofactor.

The chain is 1-aminocyclopropane-1-carboxylate oxidase homolog 9 from Arabidopsis thaliana (Mouse-ear cress).